We begin with the raw amino-acid sequence, 356 residues long: Uroporphyrinogen decarboxylase (356 aa).

Residues 25 to 29, Asp75, Tyr152, Thr207, and His326 contribute to the substrate site; that span reads RQAGR.

Belongs to the uroporphyrinogen decarboxylase family. Homodimer.

It is found in the cytoplasm. The enzyme catalyses uroporphyrinogen III + 4 H(+) = coproporphyrinogen III + 4 CO2. Its pathway is porphyrin-containing compound metabolism; protoporphyrin-IX biosynthesis; coproporphyrinogen-III from 5-aminolevulinate: step 4/4. Its function is as follows. Catalyzes the decarboxylation of four acetate groups of uroporphyrinogen-III to yield coproporphyrinogen-III. The protein is Uroporphyrinogen decarboxylase of Magnetococcus marinus (strain ATCC BAA-1437 / JCM 17883 / MC-1).